The following is a 190-amino-acid chain: UPF0149 protein NT01EI_3357 (190 aa).

The protein belongs to the UPF0149 family.

This chain is UPF0149 protein NT01EI_3357, found in Edwardsiella ictaluri (strain 93-146).